The sequence spans 291 residues: Co-chaperone protein DjlA (291 aa).

Residues 1-6 lie on the Periplasmic side of the membrane; that stretch reads MRYWGK. Residues 7–31 form a helical membrane-spanning segment; sequence LLGLALGIVSSTGIWGMIMGLLMGH. Over 32–291 the chain is Cytoplasmic; that stretch reads WIDRARASRR…ELLKSANQTK (260 aa). Residues 177–223 form a disordered region; sequence ESPTGQQSRQNQSRQNGKSQQRRNNGYSNGHSYGGQRPPSPLRGPTV. A compositionally biased stretch (low complexity) spans 181–211; sequence GQQSRQNQSRQNGKSQQRRNNGYSNGHSYGG. One can recognise a J domain in the interval 225 to 291; it reads SACRTLGVRS…ELLKSANQTK (67 aa).

As to quaternary structure, homodimer.

It is found in the cell inner membrane. Its function is as follows. Regulatory DnaK co-chaperone. Direct interaction between DnaK and DjlA is needed for the induction of the wcaABCDE operon, involved in the synthesis of a colanic acid polysaccharide capsule, possibly through activation of the RcsB/RcsC phosphotransfer signaling pathway. The colanic acid capsule may help the bacterium survive conditions outside the host. This chain is Co-chaperone protein DjlA, found in Pectobacterium atrosepticum (strain SCRI 1043 / ATCC BAA-672) (Erwinia carotovora subsp. atroseptica).